The following is a 1175-amino-acid chain: Phospholipid-transporting ATPase IF (1175 aa).

Helical transmembrane passes span 69–89 (FYFL…SPIT), 91–111 (GLPL…EDWL), 287–307 (NTFL…STIL), and 338–358 (FISD…ISLY). The active-site 4-aspartylphosphate intermediate is Asp407. ATP-binding residues include Asp407, Lys408, Thr409, Glu530, Phe571, Lys594, Arg625, Thr705, Gly706, Asp707, Arg793, and Lys799. Mg(2+) is bound at residue Asp407. A Mg(2+)-binding site is contributed by Thr409. Asp820 serves as a coordination point for Mg(2+). The ATP site is built by Asn823 and Asp824. Asp824 contributes to the Mg(2+) binding site. 6 helical membrane-spanning segments follow: residues 862 to 882 (LLFV…QYFF), 910 to 930 (VYLT…YSLV), 963 to 983 (WTVL…FLVG), 994 to 1014 (MFGN…TVTV), 1033 to 1053 (GSII…WPFL), and 1060 to 1080 (FVFI…LMVV).

The protein belongs to the cation transport ATPase (P-type) (TC 3.A.3) family. Type IV subfamily. In terms of assembly, component of a P4-ATPase flippase complex which consists of a catalytic alpha subunit ATP11B and an accessory beta subunit TMEM30A. The cofactor is Mg(2+). In terms of tissue distribution, expressed in retina, brain, liver, testes and kidney (at protein level).

Its subcellular location is the recycling endosome membrane. The protein localises to the early endosome. It localises to the endoplasmic reticulum. It is found in the golgi apparatus. The protein resides in the trans-Golgi network. It catalyses the reaction ATP + H2O + phospholipidSide 1 = ADP + phosphate + phospholipidSide 2.. The catalysed reaction is a 1,2-diacyl-sn-glycero-3-phospho-L-serine(out) + ATP + H2O = a 1,2-diacyl-sn-glycero-3-phospho-L-serine(in) + ADP + phosphate + H(+). The enzyme catalyses a 1,2-diacyl-sn-glycero-3-phosphoethanolamine(out) + ATP + H2O = a 1,2-diacyl-sn-glycero-3-phosphoethanolamine(in) + ADP + phosphate + H(+). Its function is as follows. Catalytic component of a P4-ATPase flippase complex which catalyzes the hydrolysis of ATP coupled to the transport of aminophospholipids, phosphatidylserines (PS) and phosphatidylethanolamines (PE), from the outer to the inner leaflet of intracellular membranes. May contribute to the maintenance of membrane lipid asymmetry in endosome compartment. This chain is Phospholipid-transporting ATPase IF, found in Mus musculus (Mouse).